A 253-amino-acid chain; its full sequence is Phycoerythrobilin:ferredoxin oxidoreductase (253 aa).

It belongs to the HY2 family.

The enzyme catalyses (3Z)-phycoerythrobilin + oxidized 2[4Fe-4S]-[ferredoxin] = 15,16-dihydrobiliverdin + reduced 2[4Fe-4S]-[ferredoxin] + 2 H(+). Its function is as follows. Catalyzes the two-electron reduction of the C2 and C3(1) diene system of 15,16-dihydrobiliverdin. This is Phycoerythrobilin:ferredoxin oxidoreductase (pebB) from Prochlorococcus marinus (strain MIT 9215).